We begin with the raw amino-acid sequence, 762 residues long: Endothelin-converting enzyme 1 (762 aa).

Over methionine 1 to arginine 60 the chain is Cytoplasmic. Residues leucine 61 to isoleucine 81 traverse the membrane as a helical; Signal-anchor for type II membrane protein segment. The Extracellular portion of the chain corresponds to glutamine 82–tryptophan 762. Positions valine 90–tryptophan 762 constitute a Peptidase M13 domain. Disulfide bonds link cysteine 91–cysteine 96, cysteine 114–cysteine 747, cysteine 122–cysteine 707, cysteine 177–cysteine 427, and cysteine 636–cysteine 759. Asparagine 158, asparagine 179, asparagine 202, asparagine 262, asparagine 308, asparagine 354, asparagine 375, and asparagine 531 each carry an N-linked (GlcNAc...) asparagine glycan. Residue histidine 599 participates in Zn(2+) binding. Glutamate 600 is a catalytic residue. Histidine 603 lines the Zn(2+) pocket. N-linked (GlcNAc...) asparagine glycans are attached at residues asparagine 624 and asparagine 643. Glutamate 659 is a Zn(2+) binding site. Catalysis depends on aspartate 663, which acts as the Proton donor.

The protein belongs to the peptidase M13 family. As to quaternary structure, homodimer; disulfide-linked. Interacts with PPP1R16B. Interacts with TSPAN8; this interaction recruits the endothelin converting enzyme ECE1 to tetraspanin-enriched microdomains and positively modulates its enzymatic activity. Zn(2+) is required as a cofactor. In terms of tissue distribution, all isoforms are expressed in aortic endothelial cells. Isoform A is also expressed in liver; isoform B in smooth muscle cells and fibroblasts; isoform C in aortic endothelial cells, smooth muscle cells, fibroblasts, liver and lung, and isoform D in smooth muscle cells.

It is found in the cell membrane. It catalyses the reaction Hydrolysis of the 21-Trp-|-Val-22 bond in big endothelin to form endothelin 1.. Inhibited by phosphoramidon. Its function is as follows. Converts big endothelin-1 to endothelin-1. The polypeptide is Endothelin-converting enzyme 1 (Ece1) (Rattus norvegicus (Rat)).